A 208-amino-acid polypeptide reads, in one-letter code: uncharacterized protein (208 aa).

The J domain maps to Asp4–Ser71. The interval Tyr67 to Ser100 is disordered. A compositionally biased stretch (polar residues) spans Ala72 to Asn87. Residues Pro88 to Ser100 are compositionally biased toward low complexity. Residues Gly127 to Ile147 traverse the membrane as a helical segment.

The protein belongs to the DnaJ family.

The protein localises to the endoplasmic reticulum membrane. This is an uncharacterized protein from Schizosaccharomyces pombe (strain 972 / ATCC 24843) (Fission yeast).